Here is a 434-residue protein sequence, read N- to C-terminus: Maltotriose-binding protein (434 aa).

A signal peptide spans 1-20 (MRRATYAFALLAILVLGVVA). Residues 28-52 (TTTPTQTSPATQPTTTQTPTQTETQ) form a disordered region. Residues 29-52 (TTPTQTSPATQPTTTQTPTQTETQ) are compositionally biased toward low complexity.

This sequence belongs to the bacterial solute-binding protein 1 family.

Involved in an abc transport system for maltotriose. Binds maltotriose much more tightly than maltose. This chain is Maltotriose-binding protein (malE), found in Pyrococcus furiosus (strain ATCC 43587 / DSM 3638 / JCM 8422 / Vc1).